The following is a 120-amino-acid chain: Small ribosomal subunit protein bS6 (120 aa).

A disordered region spans residues 93–120 (KKADTAPSSMMKTVEREEARKASQTEQA). Positions 105 to 120 (TVEREEARKASQTEQA) are enriched in basic and acidic residues.

This sequence belongs to the bacterial ribosomal protein bS6 family.

In terms of biological role, binds together with bS18 to 16S ribosomal RNA. In Delftia acidovorans (strain DSM 14801 / SPH-1), this protein is Small ribosomal subunit protein bS6.